We begin with the raw amino-acid sequence, 36 residues long: MTDLNLPSIFVPLVGLMFPAIAMASLSLHIQKNKII.

A helical transmembrane segment spans residues 6 to 28 (LPSIFVPLVGLMFPAIAMASLSL).

The protein belongs to the PsaI family.

The protein localises to the plastid. The protein resides in the chloroplast thylakoid membrane. Functionally, may help in the organization of the PsaL subunit. This chain is Photosystem I reaction center subunit VIII, found in Calycanthus floridus var. glaucus (Eastern sweetshrub).